Here is a 741-residue protein sequence, read N- to C-terminus: Multifunctional procollagen lysine hydroxylase and glycosyltransferase LH3 (741 aa).

The signal sequence occupies residues 1–27 (MAASVPEPRLLLLLLLLLPPLPPVTSA). Residues 28–293 (SDRPRGANPV…FCNLNRRTLP (266 aa)) form a required for glycosyltransferase activity region. UDP is bound at residue 47-49 (VAT). An N-linked (GlcNAc...) asparagine glycan is attached at Asn66. Residues Asp115, Asp118, and His256 each coordinate Mn(2+). UDP is bound at residue 115–117 (DSY). 259-262 (GPTK) provides a ligand contact to UDP. 2 disulfides stabilise this stretch: Cys282/Cys285 and Cys382/Cys388. The interval 298-523 (PPRVLLAVFV…EFGRLLSTSH (226 aa)) is accessory region. N-linked (GlcNAc...) asparagine glycosylation is present at Asn551. A disulfide bridge connects residues Cys566 and Cys701. Arg602 and Tyr659 together coordinate 2-oxoglutarate. In terms of domain architecture, Fe2OG dioxygenase spans 650-741 (RAVMNFVVRY…RYIMVSFVDP (92 aa)). Positions 670 and 672 each coordinate Fe cation. The tract at residues 675-718 (TFTLNVALNHKGVDYEGGGCRFLRYDCRVSSPRKGWALLHPGRL) is important for dimerization. A 2-oxoglutarate-binding site is contributed by Asn679. Residue His722 participates in Fe cation binding. 2-oxoglutarate is bound at residue Arg732.

As to quaternary structure, homodimer. Fe(2+) serves as cofactor. Requires L-ascorbate as cofactor. The cofactor is Mn(2+). As to expression, detected in heart and bone.

The protein resides in the rough endoplasmic reticulum. It localises to the endoplasmic reticulum lumen. It is found in the endoplasmic reticulum membrane. Its subcellular location is the secreted. The protein localises to the extracellular space. The catalysed reaction is L-lysyl-[collagen] + 2-oxoglutarate + O2 = (5R)-5-hydroxy-L-lysyl-[collagen] + succinate + CO2. It catalyses the reaction (5R)-5-hydroxy-L-lysyl-[collagen] + UDP-alpha-D-galactose = (5R)-5-O-(beta-D-galactosyl)-5-hydroxy-L-lysyl-[collagen] + UDP + H(+). It carries out the reaction (5R)-5-O-(beta-D-galactosyl)-5-hydroxy-L-lysyl-[collagen] + UDP-alpha-D-glucose = (5R)-5-O-[alpha-D-glucosyl-(1-&gt;2)-beta-D-galactosyl]-5-hydroxy-L-lysyl-[collagen] + UDP + H(+). In terms of biological role, multifunctional enzyme that catalyzes a series of post-translational modifications on Lys residues in procollagen. Plays a redundant role in catalyzing the formation of hydroxylysine residues in -Xaa-Lys-Gly- sequences in collagens. Plays a redundant role in catalyzing the transfer of galactose onto hydroxylysine groups, giving rise to galactosyl 5-hydroxylysine. Has an essential role by catalyzing the subsequent transfer of glucose moieties, giving rise to 1,2-glucosylgalactosyl-5-hydroxylysine residues. Catalyzes hydroxylation and glycosylation of Lys residues in the MBL1 collagen-like domain, giving rise to hydroxylysine and 1,2-glucosylgalactosyl-5-hydroxylysine residues. Catalyzes hydroxylation and glycosylation of Lys residues in the ADIPOQ collagen-like domain, giving rise to hydroxylysine and 1,2-glucosylgalactosyl-5-hydroxylysine residues. Essential for normal biosynthesis and secretion of type IV collagens. Essential for normal formation of basement membranes. This is Multifunctional procollagen lysine hydroxylase and glycosyltransferase LH3 (Plod3) from Rattus norvegicus (Rat).